The sequence spans 181 residues: ADP-ribosylation factor 1-like 2 (181 aa).

Gly-2 is lipidated: N-myristoyl glycine. Residues 3-16 (NVFGSLFKGLFGKK) are important for the stable binding to the membranes. Residues 24 to 32 (GLDAAGKTT), 126 to 129 (NKQD), and Ala-160 contribute to the GTP site.

This sequence belongs to the small GTPase superfamily. Arf family.

It localises to the golgi apparatus membrane. It carries out the reaction GTP + H2O = GDP + phosphate + H(+). Alternates between an inactive GDP-bound form and an active GTP-bound form. Activated by a guanine nucleotide-exchange factor (GEF) and inactivated by GTPase-activating protein (GAP). Its function is as follows. Small GTPase involved in protein trafficking between different compartments. Modulates vesicle budding and uncoating within the Golgi complex. In its GTP-bound form, triggers the recruitment of coatomer proteins to the Golgi membrane. The hydrolysis of ARF1-bound GTP, which is mediated by ARFGAPs proteins, is required for dissociation of coat proteins from Golgi membranes and vesicles. Involved in endoplasmic reticulum dynamics during embryogenesis. Also required for adult germline function. Plays a role in cell shedding during embryogenesis probably by promoting the endocytosis of cell adhesion molecules. During neurogenesis, involved in cell autonomous Q.p neuroblast asymmetric divisions that generate one precursor cell and one apoptotic cell, probably by controlling endocytosis. Plays a role in maintaining mitochondrial morphology. The polypeptide is ADP-ribosylation factor 1-like 2 (arf-1.2) (Caenorhabditis briggsae).